The chain runs to 1218 residues: ATP-dependent helicase/deoxyribonuclease subunit B (1218 aa).

The 279-residue stretch at 1 to 279 (MRFIVGRAGT…VFLTETHRFE (279 aa)) folds into the UvrD-like helicase ATP-binding domain. ATP is bound at residue 6 to 13 (GRAGTGKS). The UvrD-like helicase C-terminal domain maps to 281 to 588 (AGLKHLERFY…LVGSLDRSRN (308 aa)). Cysteine 786 is a [4Fe-4S] cluster binding site. The interval 987 to 1006 (LAEGSKGSEGSEGSEDSEDS) is disordered. 3 residues coordinate [4Fe-4S] cluster: cysteine 1126, cysteine 1129, and cysteine 1135. Over residues 1160 to 1169 (RVQSQDSEQY) the composition is skewed to polar residues. The disordered stretch occupies residues 1160 to 1218 (RVQSQDSEQYPEQHPPTSVPGETSRRALQKDGGNSPRGQELIWLGEDEAGAGKEDDGHE). Residues 1209 to 1218 (GAGKEDDGHE) are compositionally biased toward basic and acidic residues.

The protein belongs to the helicase family. AddB/RexB type 1 subfamily. As to quaternary structure, heterodimer of AddA and AddB. Mg(2+) serves as cofactor. Requires [4Fe-4S] cluster as cofactor.

Functionally, the heterodimer acts as both an ATP-dependent DNA helicase and an ATP-dependent, dual-direction single-stranded exonuclease. Recognizes the chi site generating a DNA molecule suitable for the initiation of homologous recombination. The AddB subunit has 5' -&gt; 3' nuclease activity but not helicase activity. The protein is ATP-dependent helicase/deoxyribonuclease subunit B of Desulfitobacterium hafniense (strain DSM 10664 / DCB-2).